The following is a 262-amino-acid chain: tRNA pseudouridine synthase B (262 aa).

Aspartate 77 (nucleophile) is an active-site residue.

Belongs to the pseudouridine synthase TruB family. Type 1 subfamily.

It carries out the reaction uridine(55) in tRNA = pseudouridine(55) in tRNA. Its function is as follows. Responsible for synthesis of pseudouridine from uracil-55 in the psi GC loop of transfer RNAs. The chain is tRNA pseudouridine synthase B from Protochlamydia amoebophila (strain UWE25).